A 194-amino-acid polypeptide reads, in one-letter code: MPPPAKEGGRKGPRERSGKSAPGTAQGEERAKGAPATEPPKPGWALTPQGLAAMLPAQRHRHLLFGDLLEDVGAAASTFPCGSVEPGYRMPDPRPWTQSLELPAERQNRLLGVLKAAEARGRVRALRLRYTRMRAEEIALLIQRQKSARAAIRLELFLPPQLKPARIPDPLDRQERRRVETILEENVDGTIFPR.

A disordered region spans residues 1 to 45 (MPPPAKEGGRKGPRERSGKSAPGTAQGEERAKGAPATEPPKPGWA). Over residues 7–18 (EGGRKGPRERSG) the composition is skewed to basic and acidic residues.

The chain is Protein LKAAEAR1 (LKAAEAR1) from Homo sapiens (Human).